Here is a 219-residue protein sequence, read N- to C-terminus: Cytidylate kinase (219 aa).

Position 21 to 29 (21 to 29 (GPAASGKGT)) interacts with ATP.

Belongs to the cytidylate kinase family. Type 1 subfamily.

It is found in the cytoplasm. It carries out the reaction CMP + ATP = CDP + ADP. It catalyses the reaction dCMP + ATP = dCDP + ADP. The chain is Cytidylate kinase from Rickettsia typhi (strain ATCC VR-144 / Wilmington).